An 884-amino-acid polypeptide reads, in one-letter code: Cytosolic carboxypeptidase-like protein 5 (884 aa).

In terms of domain architecture, Peptidase M14 spans 157-570 (YPFSYSDCQD…AMAIAALDMA (414 aa)). 2 residues coordinate Zn(2+): H252 and E255. Disordered stretches follow at residues 343–364 (HPQSPSEHQHSPCLPPDAPLSD) and 376–401 (HLGHTSDGDSPEDWTQTRPAEQKASG). H434 serves as a coordination point for Zn(2+). The Proton donor/acceptor role is filled by E516. Disordered regions lie at residues 603–737 (LSST…HSTG) and 784–859 (QVRP…RICY). The span at 620–635 (PPRSNSGLPVSCSENP) shows a compositional bias: polar residues. Low complexity-rich tracts occupy residues 641–666 (SFSTGTSAGGSSSSQQNSPQMKNSPS) and 714–737 (PTSSSLAPSPNPTSSSPASSHSTG). S839 carries the phosphoserine modification. The span at 846–857 (ISCSLSDSQSRI) shows a compositional bias: polar residues.

Belongs to the peptidase M14 family. Requires Zn(2+) as cofactor.

Its subcellular location is the cytoplasm. It is found in the cytosol. The protein localises to the nucleus. It localises to the cytoskeleton. The protein resides in the spindle. Its subcellular location is the midbody. The enzyme catalyses gamma-L-glutamyl-L-glutamyl-[protein] + H2O = L-glutamyl-[protein] + L-glutamate. It catalyses the reaction (L-glutamyl)(n+1)-gamma-L-glutamyl-L-glutamyl-[protein] + H2O = (L-glutamyl)(n)-gamma-L-glutamyl-L-glutamyl-[protein] + L-glutamate. It carries out the reaction C-terminal L-alpha-aminoacyl-L-glutamyl-[tubulin] + H2O = C-terminal L-alpha-aminoacyl-[tubulin] + L-glutamate. The catalysed reaction is C-terminal L-alpha-aminoacyl-L-glutamyl-L-glutamyl-[tubulin] + H2O = C-terminal L-alpha-aminoacyl-L-glutamyl-[tubulin] + L-glutamate. Metallocarboxypeptidase that mediates deglutamylation of tubulin and non-tubulin target proteins. Catalyzes the removal of polyglutamate side chains present on the gamma-carboxyl group of glutamate residues within the C-terminal tail of alpha- and beta-tubulin. Cleaves alpha- and gamma-linked polyglutamate tubulin side-chain, as well as the branching point glutamate. Also catalyzes the removal of alpha-linked glutamate residues from the carboxy-terminus of alpha-tubulin. Mediates deglutamylation of nucleotidyltransferase CGAS, leading to CGAS antiviral defense response activation. The chain is Cytosolic carboxypeptidase-like protein 5 (AGBL5) from Ailuropoda melanoleuca (Giant panda).